The following is a 288-amino-acid chain: 4-hydroxy-3-methylbut-2-enyl diphosphate reductase (288 aa).

C13 contributes to the [4Fe-4S] cluster binding site. H41 and H75 together coordinate (2E)-4-hydroxy-3-methylbut-2-enyl diphosphate. Dimethylallyl diphosphate-binding residues include H41 and H75. H41 and H75 together coordinate isopentenyl diphosphate. A [4Fe-4S] cluster-binding site is contributed by C97. H130 is a binding site for (2E)-4-hydroxy-3-methylbut-2-enyl diphosphate. H130 is a dimethylallyl diphosphate binding site. H130 is a binding site for isopentenyl diphosphate. The active-site Proton donor is E132. A (2E)-4-hydroxy-3-methylbut-2-enyl diphosphate-binding site is contributed by T168. C199 provides a ligand contact to [4Fe-4S] cluster. Positions 227, 228, 229, and 271 each coordinate (2E)-4-hydroxy-3-methylbut-2-enyl diphosphate. Dimethylallyl diphosphate is bound by residues S227, S228, N229, and S271. The isopentenyl diphosphate site is built by S227, S228, N229, and S271.

Belongs to the IspH family. [4Fe-4S] cluster is required as a cofactor.

The catalysed reaction is isopentenyl diphosphate + 2 oxidized [2Fe-2S]-[ferredoxin] + H2O = (2E)-4-hydroxy-3-methylbut-2-enyl diphosphate + 2 reduced [2Fe-2S]-[ferredoxin] + 2 H(+). It catalyses the reaction dimethylallyl diphosphate + 2 oxidized [2Fe-2S]-[ferredoxin] + H2O = (2E)-4-hydroxy-3-methylbut-2-enyl diphosphate + 2 reduced [2Fe-2S]-[ferredoxin] + 2 H(+). It participates in isoprenoid biosynthesis; dimethylallyl diphosphate biosynthesis; dimethylallyl diphosphate from (2E)-4-hydroxy-3-methylbutenyl diphosphate: step 1/1. The protein operates within isoprenoid biosynthesis; isopentenyl diphosphate biosynthesis via DXP pathway; isopentenyl diphosphate from 1-deoxy-D-xylulose 5-phosphate: step 6/6. Functionally, catalyzes the conversion of 1-hydroxy-2-methyl-2-(E)-butenyl 4-diphosphate (HMBPP) into a mixture of isopentenyl diphosphate (IPP) and dimethylallyl diphosphate (DMAPP). Acts in the terminal step of the DOXP/MEP pathway for isoprenoid precursor biosynthesis. The chain is 4-hydroxy-3-methylbut-2-enyl diphosphate reductase from Phocaeicola vulgatus (strain ATCC 8482 / DSM 1447 / JCM 5826 / CCUG 4940 / NBRC 14291 / NCTC 11154) (Bacteroides vulgatus).